The sequence spans 199 residues: MYETYHSGWIETITGSMFSGKSEELIRRLRRGIYAKQKVVVFKPAIDDRYHKEKVVSHNGNEIEAINISTAQEILNHKLEEVNVIGIDEVQFFEDDIVNIVEKLAENGHRVIVAGLDMDFRGEPFKPMPKLLAVSEHITKLQAVCSVCGSPSSRTQRLINGEPAKVDDPIILVGANESYEPRCRAHHIVAPSENEKEEM.

ATP is bound by residues 15–22 and 88–91; these read GSMFSGKS and DEVQ. Residue Glu89 is the Proton acceptor of the active site. The Zn(2+) site is built by Cys145, Cys148, Cys183, and His186.

The protein belongs to the thymidine kinase family. In terms of assembly, homotetramer.

It localises to the cytoplasm. The catalysed reaction is thymidine + ATP = dTMP + ADP + H(+). This Staphylococcus epidermidis (strain ATCC 12228 / FDA PCI 1200) protein is Thymidine kinase.